The following is a 289-amino-acid chain: Cbb3-type cytochrome c oxidase subunit FixP (289 aa).

Over 1 to 33 the chain is Cytoplasmic; that stretch reads MADKHKHVDEVSGVETTGHEWDGIRELNNPLPR. The chain crosses the membrane as a helical span at residues 34–56; the sequence is WWVYSFYATIIWAIGYAVAYPSW. Residues 57-289 are Periplasmic-facing; sequence PMLTEATKGV…VFVHSLGGGE (233 aa). 2 Cytochrome c domains span residues 110–198 and 205–286; these read FAVS…MSLT and HLVE…HSLG. Cys-123, Cys-126, His-127, Met-175, Cys-218, Cys-221, His-222, and Met-263 together coordinate heme c.

Belongs to the CcoP / FixP family. Component of the cbb3-type cytochrome c oxidase at least composed of FixN, FixO, FixQ and FixP. Heme c is required as a cofactor.

It localises to the cell inner membrane. Its pathway is energy metabolism; oxidative phosphorylation. Functionally, C-type cytochrome. Part of the cbb3-type cytochrome c oxidase complex. FixP subunit is required for transferring electrons from donor cytochrome c via its heme groups to FixO subunit. From there, electrons are shuttled to the catalytic binuclear center of FixN subunit where oxygen reduction takes place. The complex also functions as a proton pump. This is Cbb3-type cytochrome c oxidase subunit FixP from Sinorhizobium medicae (strain WSM419) (Ensifer medicae).